Here is a 262-residue protein sequence, read N- to C-terminus: Mitochondrial calcium uniporter regulator 1 (262 aa).

Residues 138-175 (EKSEFSALRTQNEKVKIELQQLKKQLNDSIVKVRASNK) adopt a coiled-coil conformation. A helical membrane pass occupies residues 239-261 (TIKYLAGSVFTCLTIALGFYRLW).

This sequence belongs to the CCDC90 family.

The protein localises to the mitochondrion inner membrane. Key regulator of mitochondrial calcium uniporter (mcu) required for calcium entry into mitochondrion. In Xenopus tropicalis (Western clawed frog), this protein is Mitochondrial calcium uniporter regulator 1.